The primary structure comprises 378 residues: Enoyl-[acyl-carrier-protein] reductase 1, mitochondrial (378 aa).

Tyr59 (proton donor) is an active-site residue. Residues Asn151, 180–183, 203–206, 284–287, 309–311, and Lys372 each bind NADP(+); these read NSQV, RDGK, YGGM, and YWL.

The protein belongs to the zinc-containing alcohol dehydrogenase family. Quinone oxidoreductase subfamily. As to quaternary structure, homodimer.

It is found in the mitochondrion matrix. It catalyses the reaction a 2,3-saturated acyl-[ACP] + NADP(+) = a (2E)-enoyl-[ACP] + NADPH + H(+). Functionally, catalyzes the NADPH-dependent reduction of trans-2-enoyl thioesters in mitochondrial fatty acid synthesis (fatty acid synthesis type II). Fatty acid chain elongation in mitochondria uses acyl carrier protein (ACP) as an acyl group carrier, but the enzyme accepts both ACP and CoA thioesters as substrates in vitro. Required for respiration and the maintenance of the mitochondrial compartment. The protein is Enoyl-[acyl-carrier-protein] reductase 1, mitochondrial (ETR1) of Debaryomyces hansenii (strain ATCC 36239 / CBS 767 / BCRC 21394 / JCM 1990 / NBRC 0083 / IGC 2968) (Yeast).